Consider the following 295-residue polypeptide: Small ribosomal subunit biogenesis GTPase RsgA (295 aa).

The region spanning 68–228 is the CP-type G domain; that stretch reads KNLLVKPHVA…VVDTPGFANL (161 aa). GTP-binding positions include 117–120 and 170–178; these read NKMD and GLSGVGKSS. Positions 250, 255, 257, and 263 each coordinate Zn(2+).

Belongs to the TRAFAC class YlqF/YawG GTPase family. RsgA subfamily. Monomer. Associates with 30S ribosomal subunit, binds 16S rRNA. Requires Zn(2+) as cofactor.

The protein localises to the cytoplasm. Functionally, one of several proteins that assist in the late maturation steps of the functional core of the 30S ribosomal subunit. Helps release RbfA from mature subunits. May play a role in the assembly of ribosomal proteins into the subunit. Circularly permuted GTPase that catalyzes slow GTP hydrolysis, GTPase activity is stimulated by the 30S ribosomal subunit. This Thermotoga neapolitana (strain ATCC 49049 / DSM 4359 / NBRC 107923 / NS-E) protein is Small ribosomal subunit biogenesis GTPase RsgA.